Reading from the N-terminus, the 484-residue chain is Transmembrane protein 161B (484 aa).

The helical transmembrane segment at 108–128 threads the bilayer; it reads LVDFTVAATVVYLITELYFCV. Asn-136 carries an N-linked (GlcNAc...) asparagine glycan. The next 2 helical transmembrane spans lie at 137-157 and 170-190; these read ISVV…FSLT and SLCI…LIVT. Asn-204 carries N-linked (GlcNAc...) asparagine glycosylation. The next 4 membrane-spanning stretches (helical) occupy residues 229–249, 266–286, 368–388, and 456–476; these read FKLI…FPGL, VTQT…LLWV, VFYY…MLLH, and LSFF…FGLF.

Belongs to the TMEM161 family.

Its subcellular location is the cell membrane. Essential for maintaining normal cardiac rhythm in the developing heart and for neonatal survival. Inhibits potassium and calcium currents in the cardiomyocytes, this assists in timely action potential repolarization and thereby maintains normal cardiac rhythm. The polypeptide is Transmembrane protein 161B (tmem161b) (Danio rerio (Zebrafish)).